We begin with the raw amino-acid sequence, 336 residues long: HTH-type transcriptional repressor PurR (336 aa).

Residues 2 to 56 (ATIKDVAKLAGVSTTTVSHVINKTRFVAEDTSKAVWDAIQQLNYSPSAVARSLKV) form the HTH lacI-type domain. Residues 4 to 23 (IKDVAKLAGVSTTTVSHVIN) constitute a DNA-binding region (H-T-H motif). A DNA-binding region spans residues 48–56 (SAVARSLKV). 4 residues coordinate hypoxanthine: Tyr73, Lys188, Phe219, and Asp273.

Homodimer.

It functions in the pathway purine metabolism; purine nucleotide biosynthesis [regulation]. Functionally, is the main repressor of the genes involved in the de novo synthesis of purine nucleotides, regulating purB, purC, purEK, purF, purHD, purL, purMN and guaBA expression. PurR is allosterically activated to bind its cognate DNA by binding the purine corepressors, hypoxanthine or guanine, thereby effecting transcription repression. The polypeptide is HTH-type transcriptional repressor PurR (Actinobacillus pleuropneumoniae serotype 3 (strain JL03)).